Reading from the N-terminus, the 557-residue chain is Anti-Muellerian hormone type-2 receptor (557 aa).

Positions 1–17 (MLGTLGLWTLLPAAAQV) are cleaved as a signal peptide. Topologically, residues 18-144 (SPNRRTCVFF…QEPQATPGGP (127 aa)) are extracellular. Cystine bridges form between Cys-55–Cys-79 and Cys-92–Cys-109. Asn-66 carries N-linked (GlcNAc...) asparagine glycosylation. Asn-119 is a glycosylation site (N-linked (GlcNAc...) asparagine). The chain crosses the membrane as a helical span at residues 145 to 165 (IWMAQLLLGVFLVLLLSIIIL). Over 166–557 (ALLQRKACRV…SVQQGSGSKS (392 aa)) the chain is Cytoplasmic. In terms of domain architecture, Protein kinase spans 201 to 511 (LRFSQVIQEG…RLAALAYPQV (311 aa)). ATP is bound by residues 207 to 215 (IQEGGHAVV) and Lys-228. Residue Asp-331 is the Proton acceptor of the active site.

The protein belongs to the protein kinase superfamily. TKL Ser/Thr protein kinase family. TGFB receptor subfamily. Interacts with type I receptor ACVR1. Mg(2+) serves as cofactor. It depends on Mn(2+) as a cofactor.

The protein localises to the membrane. The catalysed reaction is L-threonyl-[receptor-protein] + ATP = O-phospho-L-threonyl-[receptor-protein] + ADP + H(+). The enzyme catalyses L-seryl-[receptor-protein] + ATP = O-phospho-L-seryl-[receptor-protein] + ADP + H(+). In terms of biological role, on ligand binding, forms a receptor complex consisting of two type II and two type I transmembrane serine/threonine kinases. Type II receptors phosphorylate and activate type I receptors which autophosphorylate, then bind and activate SMAD transcriptional regulators. Receptor for anti-Muellerian hormone. This is Anti-Muellerian hormone type-2 receptor (Amhr2) from Rattus norvegicus (Rat).